Here is a 299-residue protein sequence, read N- to C-terminus: Myozenin-1 (299 aa).

The segment at 1–34 (MPLSGTPAPNKKRKSSKLIMELTGGGQESSGLNL) is disordered. A Phosphoserine modification is found at Ser82. A disordered region spans residues 102–174 (GQGFSYSKSN…TGSGDQAGGE (73 aa)). Gly residues-rich tracts occupy residues 112 to 125 (GRGG…GSAG) and 137 to 173 (SGSG…QAGG).

This sequence belongs to the myozenin family. In terms of assembly, interacts with ACTN2, ACTN3, FLNA, FLNB, FLNC, LDB3, PPP3CA and TCAP. Interacts via its C-terminal region with MYOT. In terms of tissue distribution, expressed primarily in skeletal muscle. Detected at lower levels in heart, prostate and pancreas.

The protein localises to the nucleus. The protein resides in the cell projection. It localises to the pseudopodium. Its function is as follows. Myozenins may serve as intracellular binding proteins involved in linking Z-disk proteins such as alpha-actinin, gamma-filamin, TCAP/telethonin, LDB3/ZASP and localizing calcineurin signaling to the sarcomere. Plays an important role in the modulation of calcineurin signaling. May play a role in myofibrillogenesis. This Homo sapiens (Human) protein is Myozenin-1.